The sequence spans 242 residues: DNA repair protein RecO (242 aa).

The protein belongs to the RecO family. In terms of assembly, monomer.

Its function is as follows. Involved in DNA repair and RecF pathway recombination. In Salmonella agona (strain SL483), this protein is DNA repair protein RecO.